The primary structure comprises 301 residues: MKIAVLSRNPRLYSTRRLVEAGERRGHQMVVIDTLRAYMNIASHKPQIHYRGRPLEGFDAVIPRIGASVTFYGCAVLRQFEMMGVFPLNESVAISRSRDKLRSLQLLSRKGIGLPVTGFAHSPDDIPDLIAMVGGAPLVIKLLEGTQGIGVVLCETQKAAESVIEAFMGMEQNIMVQEYIQEAGGADIRCFVVGEKVIAAMKRQAKPGEFRSNLHRGGTASLIKITPEERMTAIRAAKVMGLNVAGVDILRSNHGPLVMEVNSSPGLEGIETTTGKDVAGIIIEYLEKNAEHGLTRTRGKG.

An ATP-grasp domain is found at 104–287 (LQLLSRKGIG…VAGIIIEYLE (184 aa)). Residues Lys-141, 178–179 (EY), Asp-187, and 211–213 (RSN) each bind ATP. Mg(2+)-binding residues include Asp-248, Glu-260, and Asn-262. Positions 248, 260, and 262 each coordinate Mn(2+).

The protein belongs to the RimK family. Mg(2+) is required as a cofactor. Requires Mn(2+) as cofactor.

The sequence is that of Probable alpha-L-glutamate ligase from Azotobacter vinelandii (strain DJ / ATCC BAA-1303).